The chain runs to 389 residues: Mannuronan synthase (389 aa).

The PilZ domain occupies 16 to 116 (QRQFARVKLP…EVAALRYLIT (101 aa)).

Belongs to the Alg44 family.

The protein localises to the periplasm. The enzyme catalyses [(1-&gt;4)-beta-D-mannuronosyl](n) + GDP-alpha-D-mannuronate = [(1-&gt;4)-beta-D-mannuronosyl](n+1) + GDP + H(+). It participates in glycan biosynthesis; alginate biosynthesis. Its function is as follows. Required for alginate biosynthesis. In Pseudomonas aeruginosa (strain ATCC 15692 / DSM 22644 / CIP 104116 / JCM 14847 / LMG 12228 / 1C / PRS 101 / PAO1), this protein is Mannuronan synthase (alg44).